Here is a 214-residue protein sequence, read N- to C-terminus: External core antigen (214 aa).

The N-terminal stretch at 1–19 is a signal peptide; that stretch reads MQLFHLCLIISCTCPTVQA. An HBEAG region spans residues 25-27; sequence GWL. The tract at residues 165-214 is disordered; it reads NAPILSTLPETTVVRRRDRGRSPRRRTPSPRRRRSQSPRRRRSQSRESQC. The span at 178–207 shows a compositional bias: basic residues; the sequence is VRRRDRGRSPRRRTPSPRRRRSQSPRRRRS. A 1; half-length repeat occupies 186-192; it reads SPRRRTP. The interval 186 to 208 is 3 X 8 AA repeats of S-P-R-R-R-R-S-Q; the sequence is SPRRRTPSPRRRRSQSPRRRRSQ. Positions 186-214 are excised as a propeptide; it reads SPRRRTPSPRRRRSQSPRRRRSQSRESQC. 2 tandem repeats follow at residues 193 to 200 and 201 to 208.

The protein belongs to the orthohepadnavirus precore antigen family. As to quaternary structure, homodimerizes. Post-translationally, phosphorylated. In terms of processing, cleaved by host furin.

It is found in the secreted. It localises to the host nucleus. Functionally, may regulate immune response to the intracellular capsid in acting as a T-cell tolerogen, by having an immunoregulatory effect which prevents destruction of infected cells by cytotoxic T-cells. This immune regulation may predispose to chronicity during perinatal infections and prevent severe liver injury during adult infections. The protein is External core antigen of Homo sapiens (Human).